A 162-amino-acid chain; its full sequence is Endoribonuclease YbeY (162 aa).

The Zn(2+) site is built by His128, His132, and His138.

It belongs to the endoribonuclease YbeY family. Zn(2+) is required as a cofactor.

Its subcellular location is the cytoplasm. Single strand-specific metallo-endoribonuclease involved in late-stage 70S ribosome quality control and in maturation of the 3' terminus of the 16S rRNA. The chain is Endoribonuclease YbeY from Lactococcus lactis subsp. lactis (strain IL1403) (Streptococcus lactis).